Reading from the N-terminus, the 50-residue chain is Small, acid-soluble spore protein K (50 aa).

Residues 1 to 50 form a disordered region; the sequence is MVRNKAKGFPNQNNNKFEGEPRAKDDYASKRADGSINSHPQERMRASGRR. Composition is skewed to basic and acidic residues over residues 17-33 and 40-50; these read FEGE…KRAD and PQERMRASGRR.

The protein belongs to the SspK family.

It localises to the spore core. The sequence is that of Small, acid-soluble spore protein K from Bacillus velezensis (strain DSM 23117 / BGSC 10A6 / LMG 26770 / FZB42) (Bacillus amyloliquefaciens subsp. plantarum).